We begin with the raw amino-acid sequence, 332 residues long: UPF0158 protein TC_0713 (332 aa).

2 disordered regions span residues 196–215 (ALNPRPKRGRPPKQSAKVEA) and 291–332 (LGYD…KARS). Acidic residues predominate over residues 295-316 (GDGDASDFFGEEYDDDDDDDDD). Basic residues predominate over residues 320–332 (KKAAKRGRKKARS).

It belongs to the UPF0158 family.

This is UPF0158 protein TC_0713 from Chlamydia muridarum (strain MoPn / Nigg).